The sequence spans 428 residues: Folylpolyglutamate synthase (428 aa).

Residue 49–52 (GKGS) coordinates ATP. S73 lines the Mg(2+) pocket. Positions 75 and 82 each coordinate (6R)-5,10-methylenetetrahydrofolyl-(gamma-L-Glu)n. Residues E143 and H170 each contribute to the Mg(2+) site. K185 bears the N6-carboxylysine mark. ATP contacts are provided by residues N264, R300, and 313 to 316 (DGAH). (6R)-5,10-methylenetetrahydrofolyl-(gamma-L-Glu)n is bound at residue S417.

The protein belongs to the folylpolyglutamate synthase family. Monomer. It depends on Mg(2+) as a cofactor.

The enzyme catalyses (6S)-5,6,7,8-tetrahydrofolyl-(gamma-L-Glu)(n) + L-glutamate + ATP = (6S)-5,6,7,8-tetrahydrofolyl-(gamma-L-Glu)(n+1) + ADP + phosphate + H(+). It catalyses the reaction (6R)-5,10-methylenetetrahydrofolyl-(gamma-L-Glu)(n) + L-glutamate + ATP = (6R)-5,10-methylenetetrahydrofolyl-(gamma-L-Glu)(n+1) + ADP + phosphate + H(+). The catalysed reaction is 10-formyltetrahydrofolyl-(gamma-L-Glu)(n) + L-glutamate + ATP = 10-formyltetrahydrofolyl-(gamma-L-Glu)(n+1) + ADP + phosphate + H(+). Competitively inhibited by adenosine 5'-(3-thio)triphosphate and beta,gamma-methylene-ATP. In terms of biological role, involved in the conversion of folates to polyglutamate derivatives, and likely functions in the retention of cellular folate pools. Catalyzes successive MgATP-dependent additions of glutamate to a pteroylmonoglutamate substrate, with a high preference for 5,10-methylenetetrahydrofolate (mTHF). Thus, metabolizes mTHF to the tetraglutamate derivative, but longer glutamate chain length products are not observed. Tetrahydrofolate (H4PteGlu) and 10-formyl-H4PteGlu are poorer folate substrates. In contrast to E.coli FolC, this enzyme does not display dihydrofolate synthase activity. The sequence is that of Folylpolyglutamate synthase from Lacticaseibacillus casei (Lactobacillus casei).